Reading from the N-terminus, the 223-residue chain is DNA mismatch repair protein MutH (223 aa).

The protein belongs to the MutH family.

Its subcellular location is the cytoplasm. In terms of biological role, sequence-specific endonuclease that cleaves unmethylated GATC sequences. It is involved in DNA mismatch repair. This Shewanella sp. (strain ANA-3) protein is DNA mismatch repair protein MutH.